Consider the following 443-residue polypeptide: 3-ketoacyl-CoA thiolase 1, peroxisomal (443 aa).

The N-terminal 30 residues, 1–30 (MEKATERQRILLRHLQPSSSSDASLSASAC), are a transit peptide targeting the peroxisome. Cys-130 functions as the Acyl-thioester intermediate in the catalytic mechanism. Residues His-385 and Cys-417 each act as proton acceptor in the active site.

The protein belongs to the thiolase-like superfamily. Thiolase family. Homodimer. Low levels in seedlings and leaves.

It localises to the peroxisome. The enzyme catalyses an acyl-CoA + acetyl-CoA = a 3-oxoacyl-CoA + CoA. The protein operates within lipid metabolism; fatty acid metabolism. In terms of biological role, involved in fatty-acid beta-oxidation prior to gluconeogenesis during germination and subsequent seedling growth. Implicated in jasmonic acid (JA) biosynthesis. The sequence is that of 3-ketoacyl-CoA thiolase 1, peroxisomal (KAT1) from Arabidopsis thaliana (Mouse-ear cress).